The primary structure comprises 313 residues: NADH-ubiquinone oxidoreductase chain 1 (313 aa).

8 consecutive transmembrane segments (helical) span residues leucine 6–leucine 26, valine 71–leucine 91, methionine 105–phenylalanine 125, methionine 149–methionine 169, phenylalanine 173–valine 193, glycine 220–isoleucine 242, phenylalanine 255–alanine 275, and tyrosine 293–glycine 313.

It belongs to the complex I subunit 1 family.

Its subcellular location is the mitochondrion inner membrane. The enzyme catalyses a ubiquinone + NADH + 5 H(+)(in) = a ubiquinol + NAD(+) + 4 H(+)(out). Its function is as follows. Core subunit of the mitochondrial membrane respiratory chain NADH dehydrogenase (Complex I) that is believed to belong to the minimal assembly required for catalysis. Complex I functions in the transfer of electrons from NADH to the respiratory chain. The immediate electron acceptor for the enzyme is believed to be ubiquinone. This chain is NADH-ubiquinone oxidoreductase chain 1 (ND1), found in Heterololigo bleekeri (Spear squid).